The primary structure comprises 629 residues: tRNA uridine 5-carboxymethylaminomethyl modification enzyme MnmG (629 aa).

13-18 lines the FAD pocket; sequence GGGHAG. An NAD(+)-binding site is contributed by 273 to 287; that stretch reads GPRYCPSIEDKVNRF.

It belongs to the MnmG family. Homodimer. Heterotetramer of two MnmE and two MnmG subunits. FAD serves as cofactor.

It localises to the cytoplasm. Its function is as follows. NAD-binding protein involved in the addition of a carboxymethylaminomethyl (cmnm) group at the wobble position (U34) of certain tRNAs, forming tRNA-cmnm(5)s(2)U34. This is tRNA uridine 5-carboxymethylaminomethyl modification enzyme MnmG from Hahella chejuensis (strain KCTC 2396).